We begin with the raw amino-acid sequence, 155 residues long: Large ribosomal subunit protein uL13 (155 aa).

The protein belongs to the universal ribosomal protein uL13 family. As to quaternary structure, part of the 50S ribosomal subunit.

Its function is as follows. This protein is one of the early assembly proteins of the 50S ribosomal subunit, although it is not seen to bind rRNA by itself. It is important during the early stages of 50S assembly. The protein is Large ribosomal subunit protein uL13 of Rickettsia akari (strain Hartford).